A 644-amino-acid polypeptide reads, in one-letter code: Sodium/potassium/calcium exchanger 3 (644 aa).

The signal sequence occupies residues 1 to 44 (MRPSGDEDRARRRRRRRRRRDLLLSQLCFLASVALLLWSLSSLR). Over 45-107 (EQKELDLMDL…DIFTNEDRRQ (63 aa)) the chain is Extracellular. Residues asparagine 71 and asparagine 86 are each glycosylated (N-linked (GlcNAc...) asparagine). The helical transmembrane segment at 108–128 (GAVVLHVLCAIYMFYALAIVC) threads the bilayer. Residues 129–153 (DDFFVPSLEKICERLHLSEDVAGAT) lie on the Cytoplasmic side of the membrane. The Alpha-1 repeat unit spans residues 149-189 (VAGATFMAAGSSAPELFTSVIGVFITKGDVGVGTIVGSAVF). Residues 154–174 (FMAAGSSAPELFTSVIGVFIT) traverse the membrane as a helical segment. Residues 175–182 (KGDVGVGT) are Extracellular-facing. A helical transmembrane segment spans residues 183–203 (IVGSAVFNILCIIGVCGLFAG). Residues 204–210 (QVVALSS) lie on the Cytoplasmic side of the membrane. Residues 211–231 (WCLLRDSIYYTLSVIALIVFI) traverse the membrane as a helical segment. Over 232–234 (YDE) the chain is Extracellular. A helical transmembrane segment spans residues 235 to 255 (KVSWWESLVLVLMYLIYIVIM). Over 256 to 484 (KYNACIHQCF…WFMVTFASST (229 aa)) the chain is Cytoplasmic. Serine 308 is modified (phosphoserine). The disordered stretch occupies residues 405 to 442 (AEAGNETENENEDNENDEEEEEDEDDDEGPYTPFDTPS). Residues 409-433 (NETENENEDNENDEEEEEDEDDDEG) are compositionally biased toward acidic residues. The chain crosses the membrane as a helical span at residues 485–505 (LWIAAFSYMMVWMVTIIGYTL). Residues 506-510 (GIPDV) are Extracellular-facing. A helical membrane pass occupies residues 511-531 (IMGITFLAAGTSVPDCMASLI). The stretch at 518–549 (AAGTSVPDCMASLIVARQGMGDMAVSNSIGSN) is one Alpha-2 repeat. Topologically, residues 532–549 (VARQGMGDMAVSNSIGSN) are cytoplasmic. Residues 550-570 (VFDILIGLGLPWALQTLAVDY) traverse the membrane as a helical segment. Residues 571–580 (GSYIRLNSRG) are Extracellular-facing. Residues 581–601 (LIYSVGLLLASVFVTVFGVHL) form a helical membrane-spanning segment. Residues 602-615 (NKWQLDKKLGCGCL) are Cytoplasmic-facing. A helical transmembrane segment spans residues 616–636 (LLYGVFLCFSIMTEFNVFTFV). Residues 637 to 644 (NLPMCGDH) are Extracellular-facing.

Belongs to the Ca(2+):cation antiporter (CaCA) (TC 2.A.19) family. SLC24A subfamily. As to expression, abundant in the brain. Expressed at low levels in the aorta, uterus and intestine.

The protein resides in the cell membrane. It carries out the reaction Ca(2+)(out) + K(+)(out) + 4 Na(+)(in) = Ca(2+)(in) + K(+)(in) + 4 Na(+)(out). Its function is as follows. Calcium, potassium:sodium antiporter that transports 1 Ca(2+) and 1 K(+) in exchange for 4 Na(+). This chain is Sodium/potassium/calcium exchanger 3 (SLC24A3), found in Homo sapiens (Human).